The sequence spans 258 residues: UDP-2,3-diacylglucosamine hydrolase (258 aa).

Asp-15, His-17, Asp-48, Asn-88, and His-123 together coordinate Mn(2+). Asn-88–Arg-89 contributes to the substrate binding site. Substrate is bound by residues Asp-131, Ser-169, Asn-173, Lys-176, and His-204. 2 residues coordinate Mn(2+): His-204 and His-206.

This sequence belongs to the LpxH family. Mn(2+) serves as cofactor.

The protein resides in the cell inner membrane. The enzyme catalyses UDP-2-N,3-O-bis[(3R)-3-hydroxytetradecanoyl]-alpha-D-glucosamine + H2O = 2-N,3-O-bis[(3R)-3-hydroxytetradecanoyl]-alpha-D-glucosaminyl 1-phosphate + UMP + 2 H(+). The protein operates within glycolipid biosynthesis; lipid IV(A) biosynthesis; lipid IV(A) from (3R)-3-hydroxytetradecanoyl-[acyl-carrier-protein] and UDP-N-acetyl-alpha-D-glucosamine: step 4/6. Functionally, hydrolyzes the pyrophosphate bond of UDP-2,3-diacylglucosamine to yield 2,3-diacylglucosamine 1-phosphate (lipid X) and UMP by catalyzing the attack of water at the alpha-P atom. Involved in the biosynthesis of lipid A, a phosphorylated glycolipid that anchors the lipopolysaccharide to the outer membrane of the cell. The sequence is that of UDP-2,3-diacylglucosamine hydrolase from Bordetella bronchiseptica (strain ATCC BAA-588 / NCTC 13252 / RB50) (Alcaligenes bronchisepticus).